The chain runs to 420 residues: Probable protein phosphatase 2C 76 (420 aa).

The region spanning 101–347 is the PPM-type phosphatase domain; sequence SCGYCSFRGK…DNITCIVVKF (247 aa). Residues Asp-137, Gly-138, Asp-299, and Asp-338 each coordinate Mn(2+). Positions 353 to 420 are disordered; sequence ESPKIETNAM…PETKGEKAGE (68 aa). The span at 403–420 shows a compositional bias: basic and acidic residues; that stretch reads PDPKPETEPETKGEKAGE.

This sequence belongs to the PP2C family. Mg(2+) serves as cofactor. Mn(2+) is required as a cofactor.

It catalyses the reaction O-phospho-L-seryl-[protein] + H2O = L-seryl-[protein] + phosphate. The enzyme catalyses O-phospho-L-threonyl-[protein] + H2O = L-threonyl-[protein] + phosphate. This Arabidopsis thaliana (Mouse-ear cress) protein is Probable protein phosphatase 2C 76.